A 450-amino-acid chain; its full sequence is Putative serine/threonine-protein kinase R517/R518 (450 aa).

The Protein kinase domain maps to 9–290 (KMTDTVLGKG…WSELFHHYWF (282 aa)). Residues 15-23 (LGKGGFSEV) and Lys-38 contribute to the ATP site. The active-site Proton acceptor is Asp-140.

This sequence belongs to the protein kinase superfamily. Ser/Thr protein kinase family.

The catalysed reaction is L-seryl-[protein] + ATP = O-phospho-L-seryl-[protein] + ADP + H(+). The enzyme catalyses L-threonyl-[protein] + ATP = O-phospho-L-threonyl-[protein] + ADP + H(+). The polypeptide is Putative serine/threonine-protein kinase R517/R518 (Acanthamoeba polyphaga mimivirus (APMV)).